The following is a 463-amino-acid chain: FAD-dependent monooxygenase ausM (463 aa).

FAD is bound by residues Glu-40, Gly-54, and Arg-113. Tyr-217 is a catalytic residue. Residues Asp-309 and Ala-322 each coordinate FAD. Residues Val-443–Ala-463 form a helical membrane-spanning segment.

This sequence belongs to the paxM FAD-dependent monooxygenase family. The cofactor is FAD.

The protein resides in the membrane. It participates in secondary metabolite biosynthesis; terpenoid biosynthesis. Functionally, FAD-dependent monooxygenase; part of the gene cluster that mediates the biosynthesis of calidodehydroaustin, a fungal meroterpenoid. The first step of the pathway is the synthesis of 3,5-dimethylorsellinic acid by the polyketide synthase ausA. 3,5-dimethylorsellinic acid is then prenylated by the polyprenyl transferase ausN. Further epoxidation by the FAD-dependent monooxygenase ausM and cyclization by the probable terpene cyclase ausL lead to the formation of protoaustinoid A. Protoaustinoid A is then oxidized to spiro-lactone preaustinoid A3 by the combined action of the FAD-binding monooxygenases ausB and ausC, and the dioxygenase ausE. Acid-catalyzed keto-rearrangement and ring contraction of the tetraketide portion of preaustinoid A3 by ausJ lead to the formation of preaustinoid A4. The aldo-keto reductase ausK, with the help of ausH, is involved in the next step by transforming preaustinoid A4 into isoaustinone which is in turn hydroxylated by the P450 monooxygenase ausI to form austinolide. The cytochrome P450 monooxygenase ausG modifies austinolide to austinol. Austinol is further acetylated to austin by the O-acetyltransferase ausP, which spontaneously changes to dehydroaustin. The cytochrome P450 monooxygenase ausR then converts dehydroaustin is into 7-dehydrodehydroaustin. The hydroxylation catalyzed by ausR permits the O-acetyltransferase ausQ to add an additional acetyl group to the molecule, leading to the formation of acetoxydehydroaustin. The short chain dehydrogenase ausT catalyzes the reduction of the double bond present between carbon atoms 1 and 2 to convert 7-dehydrodehydroaustin into 1,2-dihydro-7-hydroxydehydroaustin. AusQ catalyzes not only an acetylation reaction but also the addition of the PKS ausV diketide product to 1,2-dihydro-7-hydroxydehydroaustin, forming precalidodehydroaustin. Finally, the iron/alpha-ketoglutarate-dependent dioxygenase converts precalidodehydroaustin into calidodehydroaustin. The sequence is that of FAD-dependent monooxygenase ausM from Aspergillus calidoustus.